The chain runs to 336 residues: N-acetyl-gamma-glutamyl-phosphate reductase (336 aa).

Cys-144 is a catalytic residue.

It belongs to the NAGSA dehydrogenase family. Type 1 subfamily.

The protein resides in the cytoplasm. It catalyses the reaction N-acetyl-L-glutamate 5-semialdehyde + phosphate + NADP(+) = N-acetyl-L-glutamyl 5-phosphate + NADPH + H(+). It participates in amino-acid biosynthesis; L-arginine biosynthesis; N(2)-acetyl-L-ornithine from L-glutamate: step 3/4. Its function is as follows. Catalyzes the NADPH-dependent reduction of N-acetyl-5-glutamyl phosphate to yield N-acetyl-L-glutamate 5-semialdehyde. This Methanosarcina acetivorans (strain ATCC 35395 / DSM 2834 / JCM 12185 / C2A) protein is N-acetyl-gamma-glutamyl-phosphate reductase.